We begin with the raw amino-acid sequence, 275 residues long: MSSEKSSFPEKPPSFEKPSHSNTADHTRSGVHYFFAGWRLISLPGIRRFVILPLLMNIVLMGGAFWWLFTQLNDWIPQIMSHIPSWLQWLSYLIWPLAVLSILLVFSYLFSTIANFIAAPFNGLLAEQLEAKLTGQTLPDSGILSIAKDVPRIMKREVQKLAYYLPRAIVLLLLYFIPGIGQTVAPVLWFLFSAWMLAIQYCDYPFDNHKVGFSTMRQALRRHKVANMQFGALVSLFTLVPFLNLVIMPVAVCGATQLWVDRYRNLSATLPKKSP.

The interval 1-24 is disordered; that stretch reads MSSEKSSFPEKPPSFEKPSHSNTA. Basic and acidic residues predominate over residues 13 to 24; the sequence is PSFEKPSHSNTA. The next 4 membrane-spanning stretches (helical) occupy residues 49–69, 93–113, 169–189, and 232–252; these read FVIL…WWLF, LIWP…FSTI, IVLL…PVLW, and ALVS…PVAV.

This sequence belongs to the CysZ family.

The protein resides in the cell inner membrane. Functionally, high affinity, high specificity proton-dependent sulfate transporter, which mediates sulfate uptake. Provides the sulfur source for the cysteine synthesis pathway. This Pectobacterium atrosepticum (strain SCRI 1043 / ATCC BAA-672) (Erwinia carotovora subsp. atroseptica) protein is Sulfate transporter CysZ.